Reading from the N-terminus, the 397-residue chain is Phosphopentomutase (397 aa).

Positions 10, 296, 301, 337, 338, and 349 each coordinate Mn(2+).

It belongs to the phosphopentomutase family. Mn(2+) serves as cofactor.

The protein resides in the cytoplasm. It catalyses the reaction 2-deoxy-alpha-D-ribose 1-phosphate = 2-deoxy-D-ribose 5-phosphate. The catalysed reaction is alpha-D-ribose 1-phosphate = D-ribose 5-phosphate. It participates in carbohydrate degradation; 2-deoxy-D-ribose 1-phosphate degradation; D-glyceraldehyde 3-phosphate and acetaldehyde from 2-deoxy-alpha-D-ribose 1-phosphate: step 1/2. Isomerase that catalyzes the conversion of deoxy-ribose 1-phosphate (dRib-1-P) and ribose 1-phosphate (Rib-1-P) to deoxy-ribose 5-phosphate (dRib-5-P) and ribose 5-phosphate (Rib-5-P), respectively. The sequence is that of Phosphopentomutase from Elusimicrobium minutum (strain Pei191).